Reading from the N-terminus, the 295-residue chain is UDP-N-acetylenolpyruvoylglucosamine reductase (295 aa).

The FAD-binding PCMH-type domain maps to 24–188 (KVGGNAEIFF…LKAVFKVNKG (165 aa)). Arg-168 is a catalytic residue. The Proton donor role is filled by Ser-217. Residue Glu-287 is part of the active site.

This sequence belongs to the MurB family. FAD is required as a cofactor.

It is found in the cytoplasm. The enzyme catalyses UDP-N-acetyl-alpha-D-muramate + NADP(+) = UDP-N-acetyl-3-O-(1-carboxyvinyl)-alpha-D-glucosamine + NADPH + H(+). It functions in the pathway cell wall biogenesis; peptidoglycan biosynthesis. Its function is as follows. Cell wall formation. This chain is UDP-N-acetylenolpyruvoylglucosamine reductase, found in Rickettsia felis (strain ATCC VR-1525 / URRWXCal2) (Rickettsia azadi).